We begin with the raw amino-acid sequence, 361 residues long: Anthranilate phosphoribosyltransferase (361 aa).

5-phospho-alpha-D-ribose 1-diphosphate contacts are provided by residues glycine 80, 83–84 (GD), threonine 88, 90–93 (NVST), 108–116 (KHGNYSVSS), and serine 120. Residue glycine 80 coordinates anthranilate. Serine 92 contributes to the Mg(2+) binding site. Asparagine 111 serves as a coordination point for anthranilate. Arginine 166 contributes to the anthranilate binding site. Residues aspartate 224 and glutamate 225 each contribute to the Mg(2+) site. Residues 338 to 361 (EGDGEAASTDSAAASTTAGPEDDD) form a disordered region. Low complexity predominate over residues 343-355 (AASTDSAAASTTA).

It belongs to the anthranilate phosphoribosyltransferase family. As to quaternary structure, homodimer. Requires Mg(2+) as cofactor.

It carries out the reaction N-(5-phospho-beta-D-ribosyl)anthranilate + diphosphate = 5-phospho-alpha-D-ribose 1-diphosphate + anthranilate. The protein operates within amino-acid biosynthesis; L-tryptophan biosynthesis; L-tryptophan from chorismate: step 2/5. Functionally, catalyzes the transfer of the phosphoribosyl group of 5-phosphorylribose-1-pyrophosphate (PRPP) to anthranilate to yield N-(5'-phosphoribosyl)-anthranilate (PRA). The polypeptide is Anthranilate phosphoribosyltransferase (Halorubrum lacusprofundi (strain ATCC 49239 / DSM 5036 / JCM 8891 / ACAM 34)).